A 915-amino-acid polypeptide reads, in one-letter code: Protein SLFN14 (915 aa).

The span at 157-167 (AAQRGRRRLHP) shows a compositional bias: basic residues. The disordered stretch occupies residues 157–176 (AAQRGRRRLHPPRASNSNLQ). The required for endoribonuclease activity stretch occupies residues 204 to 389 (ESTHVEFKRF…KVLEFKGALQ (186 aa)). The required for ribosome binding stretch occupies residues 390–569 (RHLFPVTQKT…QLGCEFFNLL (180 aa)).

As to quaternary structure, associates with ribosomes in an ATP-independent manner. Mg(2+) serves as cofactor. Mn(2+) is required as a cofactor. As to expression, detected in reticulocytes (at protein level).

Its subcellular location is the nucleus. Shows no ribosome-associated and endoribonuclease activities. In terms of biological role, displays polysome-associated endoribonuclease activity towards mRNAs and rRNAs. May play a role in RNA surveillance pathways by recognizing stalled ribosomes and triggering endonucleolytic cleavage of aberrant mRNAs. Cleaves RNAs in a magnesium-, manganese-dependent and ATP-independent manner. Involved in correct maturation of megakaryocytes and especially important for proplatelet extension. The polypeptide is Protein SLFN14 (Oryctolagus cuniculus (Rabbit)).